The following is a 249-amino-acid chain: Derlin-2 (249 aa).

At 1–21 the chain is on the cytoplasmic side; sequence MAQAVEEWYRQMPIITRSYLT. The chain crosses the membrane as a helical span at residues 22–42; sequence AAVVTTVGCTLEIISPYHLYL. At 43–96 the chain is on the lumenal side; the sequence is NPKLVVQHYEIWRLVTNFLYFRKMDLDFLFHMFFLARYCKLLEENSFRGRTADF. A helical membrane pass occupies residues 97–117; it reads FYMLLFGATVLTGIVLIGGMI. Residues 118–122 are Cytoplasmic-facing; that stretch reads PYISE. The helical transmembrane segment at 123–143 threads the bilayer; the sequence is TFARILFLSNSLTFMMVYVWS. Topologically, residues 144–152 are lumenal; the sequence is KHNPFIHMS. Residues 153 to 173 traverse the membrane as a helical segment; that stretch reads FLGLFTFTAAYLPWVLLGFSI. Residues 174–249 are Cytoplasmic-facing; the sequence is LVGSSTWVDL…GAMGADPQAQ (76 aa).

The protein belongs to the derlin family.

It is found in the endoplasmic reticulum membrane. May be involved in the degradation process of specific misfolded endoplasmic reticulum (ER) luminal proteins. The chain is Derlin-2 (DER2) from Oryza sativa subsp. japonica (Rice).